The following is a 217-amino-acid chain: Adenylate kinase (217 aa).

10–15 (GAGKGT) contacts ATP. The tract at residues 30 to 59 (STGDMFRAAMKNETELGLKAKSYMDAGELV) is NMP. AMP-binding positions include Thr-31, Arg-36, 57–59 (ELV), 85–88 (GFPR), and Gln-92. An LID region spans residues 126–163 (GRRVSPTSGRTYHVIFNPPKVEGICDVDGSELIQRDDD). Residues Arg-127 and 136 to 137 (TY) each bind ATP. Residues Arg-160 and Arg-171 each coordinate AMP. Gln-199 serves as a coordination point for ATP.

Belongs to the adenylate kinase family. In terms of assembly, monomer.

The protein resides in the cytoplasm. The enzyme catalyses AMP + ATP = 2 ADP. The protein operates within purine metabolism; AMP biosynthesis via salvage pathway; AMP from ADP: step 1/1. In terms of biological role, catalyzes the reversible transfer of the terminal phosphate group between ATP and AMP. Plays an important role in cellular energy homeostasis and in adenine nucleotide metabolism. This is Adenylate kinase from Halalkalibacterium halodurans (strain ATCC BAA-125 / DSM 18197 / FERM 7344 / JCM 9153 / C-125) (Bacillus halodurans).